A 375-amino-acid polypeptide reads, in one-letter code: Glutamate 5-kinase (375 aa).

K3 provides a ligand contact to ATP. Substrate contacts are provided by S44, D131, and N143. Residues 163–164 (SD) and 205–211 (TGGMVTK) each bind ATP. Residues 269-346 (EGTLWVDDGA…GDIEALLGYR (78 aa)) form the PUA domain.

Belongs to the glutamate 5-kinase family.

It localises to the cytoplasm. The catalysed reaction is L-glutamate + ATP = L-glutamyl 5-phosphate + ADP. It functions in the pathway amino-acid biosynthesis; L-proline biosynthesis; L-glutamate 5-semialdehyde from L-glutamate: step 1/2. Its function is as follows. Catalyzes the transfer of a phosphate group to glutamate to form L-glutamate 5-phosphate. The polypeptide is Glutamate 5-kinase (Rhodospirillum rubrum (strain ATCC 11170 / ATH 1.1.1 / DSM 467 / LMG 4362 / NCIMB 8255 / S1)).